The following is a 467-amino-acid chain: Asparagine--tRNA ligase (467 aa).

This sequence belongs to the class-II aminoacyl-tRNA synthetase family. Homodimer.

The protein localises to the cytoplasm. The enzyme catalyses tRNA(Asn) + L-asparagine + ATP = L-asparaginyl-tRNA(Asn) + AMP + diphosphate + H(+). This is Asparagine--tRNA ligase from Haemophilus influenzae (strain PittGG).